The primary structure comprises 495 residues: F(420)H(2) dehydrogenase subunit M (495 aa).

Transmembrane regions (helical) follow at residues 1 to 21 (MLPV…VTFF), 27 to 47 (LAAG…LYAY), 57 to 77 (MQFY…SVGI), 80 to 100 (VSMP…LFTW), 108 to 128 (NRFY…FVAL), 130 to 150 (FVVF…IVNL), 163 to 183 (FFIY…GLFY), 215 to 235 (IFLA…FHSW), 249 to 269 (ILFI…LPML), 277 to 297 (LMIM…ALLA), 315 to 335 (MGYV…GAMF), 338 to 358 (FSHG…QTAA), 378 to 398 (VAMM…GFIA), 412 to 432 (VFVV…LWAM), and 450 to 470 (INSI…YFGL).

Belongs to the complex I subunit 4 family. As to quaternary structure, the FPO complex is composed of at least 13 different subunits. FpoA, FpoH, FpoJ, FpoK, FpoL, FpoM and FpoN proteins constitute the membrane sector of the complex.

The protein localises to the cell membrane. It catalyses the reaction methanophenazine + reduced coenzyme F420-(gamma-L-Glu)(n) = dihydromethanophenazine + oxidized coenzyme F420-(gamma-L-Glu)(n) + H(+). Its function is as follows. Component of the F(420)H(2) dehydrogenase (FPO complex) which is part of the energy-conserving F(420)H(2):heterodisulfide oxidoreductase system. The membrane-bound electron transfer system of the complex plays an important role in the metabolism of methylotrophic methanogens when the organisms grow on methanol or methylamines. Catalyzes the oxidation of methanophenazine to dihydromethanophenazine. It shuttles electrons from F(420)H(2), via FAD and iron-sulfur (Fe-S) centers, to methanophenazine (an electron carrier in the membrane). It couples the redox reaction to proton translocation (for every two electrons transferred, two hydrogen ions are translocated across the cytoplasmic membrane), and thus conserves the redox energy in a proton gradient. It also catalyzes the oxidation of F(420)H(2) with quinones such as 2,3-dimethyl-1,4-naphthoquinone, 2-methyl-1,4-naphthoquinone and tetramethyl-p-benzoquinone. This Methanosarcina mazei (strain ATCC BAA-159 / DSM 3647 / Goe1 / Go1 / JCM 11833 / OCM 88) (Methanosarcina frisia) protein is F(420)H(2) dehydrogenase subunit M (fpoM).